The sequence spans 905 residues: Protein translocase subunit SecA (905 aa).

Residues glutamine 87, 105–109 (GEGKT), and aspartate 512 contribute to the ATP site. The interval 840–905 (AQRQQEAMAQ…HCHGSKARYA (66 aa)) is disordered. A compositionally biased stretch (low complexity) spans 843 to 852 (QQEAMAQAES). Positions 853–862 (ENYRTADHQA) are enriched in basic and acidic residues. Positions 863 to 874 (EAQQSESLTEEQ) are enriched in polar residues. 4 residues coordinate Zn(2+): cysteine 886, cysteine 888, cysteine 897, and histidine 898. Positions 892-905 (KKYKHCHGSKARYA) are enriched in basic residues.

The protein belongs to the SecA family. Monomer and homodimer. Part of the essential Sec protein translocation apparatus which comprises SecA, SecYEG and auxiliary proteins SecDF-YajC and YidC. The cofactor is Zn(2+).

Its subcellular location is the cell inner membrane. It is found in the cytoplasm. It carries out the reaction ATP + H2O + cellular proteinSide 1 = ADP + phosphate + cellular proteinSide 2.. Functionally, part of the Sec protein translocase complex. Interacts with the SecYEG preprotein conducting channel. Has a central role in coupling the hydrolysis of ATP to the transfer of proteins into and across the cell membrane, serving both as a receptor for the preprotein-SecB complex and as an ATP-driven molecular motor driving the stepwise translocation of polypeptide chains across the membrane. In Actinobacillus pleuropneumoniae serotype 3 (strain JL03), this protein is Protein translocase subunit SecA.